A 358-amino-acid polypeptide reads, in one-letter code: MKPVYIIQRRKSKQVFVGDVAIGGDAPISVQSMTNTETTDVKATVAQIQAIQNAGADLVRVSVPTIDAAEAFKIIKKQVNIPLISDIHFDYKIALKVAEYGADCLRINPGNIGREDRIREVVAAAIDHNIPIRIGVNAGSLEKDLQKKYTEPTPEAMVESAFRQIDILDKLNFDNFKISLKASEIFMTVFAYQQLASQIDNPLHLGITEAGSLRFGTIKSSIGLGLLLSEGIGDTIRISLASDPVDEVRVGFDILKSLNLRSKGVNLIACPSCSRQKFDVIKIVNELESRLEGITAPIDVAVIGCVVNGPGEAKAVSVGLIGGEPNLLYLDGKTHSKITNENLVNELEAQVRNRLKSP.

4 residues coordinate [4Fe-4S] cluster: Cys-270, Cys-273, Cys-305, and Glu-312.

Belongs to the IspG family. [4Fe-4S] cluster is required as a cofactor.

The enzyme catalyses (2E)-4-hydroxy-3-methylbut-2-enyl diphosphate + oxidized [flavodoxin] + H2O + 2 H(+) = 2-C-methyl-D-erythritol 2,4-cyclic diphosphate + reduced [flavodoxin]. Its pathway is isoprenoid biosynthesis; isopentenyl diphosphate biosynthesis via DXP pathway; isopentenyl diphosphate from 1-deoxy-D-xylulose 5-phosphate: step 5/6. In terms of biological role, converts 2C-methyl-D-erythritol 2,4-cyclodiphosphate (ME-2,4cPP) into 1-hydroxy-2-methyl-2-(E)-butenyl 4-diphosphate. The sequence is that of 4-hydroxy-3-methylbut-2-en-1-yl diphosphate synthase (flavodoxin) from Ruthia magnifica subsp. Calyptogena magnifica.